Reading from the N-terminus, the 354-residue chain is Uroporphyrinogen decarboxylase (354 aa).

Substrate-binding positions include 27–31 (RQAGR), Asp77, Tyr153, Thr208, and His326.

This sequence belongs to the uroporphyrinogen decarboxylase family. As to quaternary structure, homodimer.

The protein localises to the cytoplasm. The catalysed reaction is uroporphyrinogen III + 4 H(+) = coproporphyrinogen III + 4 CO2. It participates in porphyrin-containing compound metabolism; protoporphyrin-IX biosynthesis; coproporphyrinogen-III from 5-aminolevulinate: step 4/4. Catalyzes the decarboxylation of four acetate groups of uroporphyrinogen-III to yield coproporphyrinogen-III. The protein is Uroporphyrinogen decarboxylase of Neisseria gonorrhoeae (strain ATCC 700825 / FA 1090).